We begin with the raw amino-acid sequence, 1370 residues long: Zinc finger MYM-type protein 3 (1370 aa).

Composition is skewed to low complexity over residues 1–12 (MDPSDFPSPFDP), 40–56 (APSRGWAPPGPSPSSGA), and 130–146 (GAGASPPSPEGLLEPLA). Disordered regions lie at residues 1–73 (MDPS…PGGV) and 85–310 (GLLY…MGTK). Basic and acidic residues predominate over residues 227–255 (TGKEIEKPPERVQKRSERVRRAEPPKPEV). 2 positions are modified to phosphoserine: serine 265 and serine 269. A compositionally biased stretch (acidic residues) spans 265 to 281 (SDEDSDAMVDDPNDEDF). Residues lysine 310, lysine 322, and lysine 330 each participate in a glycyl lysine isopeptide (Lys-Gly) (interchain with G-Cter in SUMO2) cross-link. 9 MYM-type zinc fingers span residues 334 to 368 (QLFCSSSCLTTYSKKPLGRKTCTFCKKEIWNTKDS), 380 to 424 (HEFC…LHEV), 431 to 466 (HRLCSDSCFSKFRANKGLKTNCCDQCGAYIYARPGG), 479 to 513 (KRFCNTTCLGAYKKKNTRVYPCVWCKTLCKNFEML), 523 to 561 (SLFCSLCCTTSYKVKQAGLTGPPRPCSFCRRSLSDPCYY), 569 to 606 (YQFCSPSCWTKFQHTSPEGGIHLSCHYCHSLFSGKPEV), 614 to 648 (FQFCCRDCCEDFKRLRGVVSQCEHCRQEKLLHEKL), 655 to 694 (KSFCSEGCVLLYKQDFTKKLGLCCITCTYCSQTCQRGVTE), and 701 to 735 (WDFCSEDCKTKYLLWYCKAARCHACKRQGKLLETI). Residues 761–789 (NLDTQSGPESLLNSQSSESKPQTPSQTKV) show a composition bias toward polar residues. The disordered stretch occupies residues 761–831 (NLDTQSGPES…PPPPATPRKN (71 aa)). Residues lysine 780 and lysine 788 each participate in a glycyl lysine isopeptide (Lys-Gly) (interchain with G-Cter in SUMO2) cross-link. The segment covering 790–799 (ENNHTVRTPD) has biased composition (basic and acidic residues). Residue threonine 797 is modified to Phosphothreonine. Lysine 806 is covalently cross-linked (Glycyl lysine isopeptide (Lys-Gly) (interchain with G-Cter in SUMO2)). The span at 816-827 (VPTPPPPPPPAT) shows a compositional bias: pro residues. Threonine 818 and threonine 827 each carry phosphothreonine. Glycyl lysine isopeptide (Lys-Gly) (interchain with G-Cter in SUMO2) cross-links involve residues lysine 848, lysine 862, lysine 921, and lysine 1276.

In terms of assembly, may be a component of a BHC histone deacetylase complex that contains HDAC1, HDAC2, HMG20B/BRAF35, KDM1A, RCOR1/CoREST, PHF21A/BHC80, ZMYM2, ZNF217, ZMYM3, GSE1 and GTF2I. Ubiquitously expressed in all embryonic stages and adult tissues.

The protein localises to the nucleus. Its function is as follows. Plays a role in the regulation of cell morphology and cytoskeletal organization. The chain is Zinc finger MYM-type protein 3 (Zmym3) from Mus musculus (Mouse).